The chain runs to 595 residues: Actin-histidine N-methyltransferase (595 aa).

The segment at 1 to 22 is disordered; the sequence is MGKKSRVKTQKSGTGATATVSP. Residues 10–20 are compositionally biased toward polar residues; it reads QKSGTGATATV. S-adenosyl-L-methionine is bound by residues arginine 75, 104 to 106, arginine 254, 275 to 279, and 325 to 327; these read EGF, DMCNH, and SGF. Residues 94 to 314 enclose the SET domain; the sequence is EGFEMVNFKE…AGEQIYIFYG (221 aa). The residue at position 513 (serine 513) is a Phosphoserine. Residues 549–563 show a composition bias toward polar residues; the sequence is ENGLVNGENSIPNGT. A disordered region spans residues 549 to 595; it reads ENGLVNGENSIPNGTRSEDENLNQEESKRAVEDAKGSSSDRADAVKE. A compositionally biased stretch (basic and acidic residues) spans 573–595; the sequence is EESKRAVEDAKGSSSDRADAVKE.

This sequence belongs to the class V-like SAM-binding methyltransferase superfamily. SETD3 actin-histidine methyltransferase family. In terms of assembly, interacts with MYOD1. Post-translationally, phosphorylated by GSK3B, which is required for recognition by the SCF(FBXW7) complex and subsequent degradation. In terms of processing, ubiquitinated by the SCF(FBXW7) complex following phosphorylation by GSK3B, leading to its degradation by the proteasome.

Its subcellular location is the cytoplasm. It is found in the nucleus. The catalysed reaction is L-histidyl-[protein] + S-adenosyl-L-methionine = N(tele)-methyl-L-histidyl-[protein] + S-adenosyl-L-homocysteine + H(+). Protein-histidine N-methyltransferase that specifically mediates 3-methylhistidine (tele-methylhistidine) methylation of actin at 'His-73'. Histidine methylation of actin is required for smooth muscle contraction of the laboring uterus during delivery. Does not have protein-lysine N-methyltransferase activity and probably only catalyzes histidine methylation of actin. The protein is Actin-histidine N-methyltransferase of Callithrix jacchus (White-tufted-ear marmoset).